The following is a 175-amino-acid chain: Large ribosomal subunit protein uL10 (175 aa).

It belongs to the universal ribosomal protein uL10 family. As to quaternary structure, part of the ribosomal stalk of the 50S ribosomal subunit. The N-terminus interacts with L11 and the large rRNA to form the base of the stalk. The C-terminus forms an elongated spine to which L12 dimers bind in a sequential fashion forming a multimeric L10(L12)X complex.

Functionally, forms part of the ribosomal stalk, playing a central role in the interaction of the ribosome with GTP-bound translation factors. The chain is Large ribosomal subunit protein uL10 from Xylella fastidiosa (strain M12).